Reading from the N-terminus, the 326-residue chain is tRNA(Ile)-lysidine synthase (326 aa).

Serine 25 to serine 30 is an ATP binding site.

It belongs to the tRNA(Ile)-lysidine synthase family.

The protein resides in the cytoplasm. It catalyses the reaction cytidine(34) in tRNA(Ile2) + L-lysine + ATP = lysidine(34) in tRNA(Ile2) + AMP + diphosphate + H(+). Its function is as follows. Ligates lysine onto the cytidine present at position 34 of the AUA codon-specific tRNA(Ile) that contains the anticodon CAU, in an ATP-dependent manner. Cytidine is converted to lysidine, thus changing the amino acid specificity of the tRNA from methionine to isoleucine. This Prochlorococcus marinus (strain NATL1A) protein is tRNA(Ile)-lysidine synthase.